We begin with the raw amino-acid sequence, 666 residues long: Collagen alpha-1(XXV) chain (666 aa).

The segment at 1–24 (MLVKKLAGKGGGRESGSEDPRPLG) is disordered. Over 1-33 (MLVKKLAGKGGGRESGSEDPRPLGQRCAGTMPS) the chain is Cytoplasmic. Over residues 11 to 21 (GGRESGSEDPR) the composition is skewed to basic and acidic residues. A helical; Signal-anchor for type II membrane protein membrane pass occupies residues 34–54 (CTALATLLSVVAVAFCFYLGV). Topologically, residues 55–666 (KTNDLQARIA…GLPMPGCWQK (612 aa)) are extracellular. A disordered region spans residues 116–168 (LECNCPAGPPGKRGKRGRRGESGPPGQPGPQGPPGPKGDKGEQGDQGPRMVFP). The region spanning 121 to 164 (PAGPPGKRGKRGRRGESGPPGQPGPQGPPGPKGDKGEQGDQGPR) is the Collagen-like 1 domain. Pro residues predominate over residues 140-151 (PGQPGPQGPPGP). Positions 181-188 (LIKRRLIK) are interaction with amyloid-beta peptide. Disordered stretches follow at residues 189-428 (GDQG…ATEI) and 445-666 (LTVT…CWQK). Collagen-like domains lie at 192–247 (GQAG…QKGS), 249–308 (GAPG…PGSS), 311–370 (GIKG…AGPP), 373–425 (GERG…DPGA), 455–514 (GPQG…KGEK), 529–588 (GPPG…KGAM), and 589–648 (GEPG…DGLD). Residues 196 to 208 (PPGPPGPPGPRGP) are compositionally biased toward pro residues. Residues 230–245 (PGEQGLMGPLGPPGQK) show a composition bias toward low complexity. Residues 280 to 290 (EPGKEGEKGDA) show a composition bias toward basic and acidic residues. Residues 336–358 (LPGIKGEPGFIGPQGEPGLPGLP) show a composition bias toward low complexity. 2 stretches are compositionally biased toward basic and acidic residues: residues 361–377 (KGDR…ERGD) and 398–407 (SKGDRGDKGD). Residues 457–466 (QGLQGPKGEQ) are compositionally biased toward low complexity. Gly residues predominate over residues 494 to 503 (GEKGGLGLPG). Residues 528–543 (IGPPGPPGPHGPPGPM) show a composition bias toward pro residues. Positions 615 to 638 (RGEKGDLGEKGEKGFRGVKGEKGE) are enriched in basic and acidic residues.

As to quaternary structure, forms homodimers and homotrimers. Binds to the fibrillized forms of amyloid-beta protein 40 (beta-APP40) and amyloid-betad protein 42 (beta-APP42). Found associated with beta-APP42 more frequently than with beta-APP40. Undergoes proteolytic cleavage by furin protease to yield the soluble collagen-like Alzheimer amyloid plaque component. In terms of processing, glycosylated. Post-translationally, hydroxylated on proline and lysine residues. As to expression, expressed predominantly in neurons with low levels also detected in heart, testis and eye.

It localises to the membrane. Functionally, inhibits fibrillization of amyloid-beta peptide during the elongation phase. Has also been shown to assemble amyloid fibrils into protease-resistant aggregates. Binds heparin. This chain is Collagen alpha-1(XXV) chain, found in Mus musculus (Mouse).